We begin with the raw amino-acid sequence, 284 residues long: Polyamine aminopropyltransferase (284 aa).

In terms of domain architecture, PABS spans 2–237 (ELWYTEKHTE…GHWLFGFASK (236 aa)). S-methyl-5'-thioadenosine is bound at residue Gln31. Spermidine-binding residues include His62 and Asp86. S-methyl-5'-thioadenosine is bound by residues Glu106 and 137–138 (DG). Asp155 (proton acceptor) is an active-site residue. 155 to 158 (DSTD) provides a ligand contact to spermidine. An S-methyl-5'-thioadenosine-binding site is contributed by Pro162.

It belongs to the spermidine/spermine synthase family. Homodimer or homotetramer.

The protein localises to the cytoplasm. It catalyses the reaction S-adenosyl 3-(methylsulfanyl)propylamine + putrescine = S-methyl-5'-thioadenosine + spermidine + H(+). The protein operates within amine and polyamine biosynthesis; spermidine biosynthesis; spermidine from putrescine: step 1/1. Its function is as follows. Catalyzes the irreversible transfer of a propylamine group from the amino donor S-adenosylmethioninamine (decarboxy-AdoMet) to putrescine (1,4-diaminobutane) to yield spermidine. The polypeptide is Polyamine aminopropyltransferase (Clostridium botulinum (strain Alaska E43 / Type E3)).